The sequence spans 357 residues: 4-hydroxy-3-methylbut-2-en-1-yl diphosphate synthase (flavodoxin) (357 aa).

[4Fe-4S] cluster is bound by residues Cys264, Cys267, Cys299, and Glu306.

Belongs to the IspG family. The cofactor is [4Fe-4S] cluster.

The enzyme catalyses (2E)-4-hydroxy-3-methylbut-2-enyl diphosphate + oxidized [flavodoxin] + H2O + 2 H(+) = 2-C-methyl-D-erythritol 2,4-cyclic diphosphate + reduced [flavodoxin]. The protein operates within isoprenoid biosynthesis; isopentenyl diphosphate biosynthesis via DXP pathway; isopentenyl diphosphate from 1-deoxy-D-xylulose 5-phosphate: step 5/6. Converts 2C-methyl-D-erythritol 2,4-cyclodiphosphate (ME-2,4cPP) into 1-hydroxy-2-methyl-2-(E)-butenyl 4-diphosphate. The sequence is that of 4-hydroxy-3-methylbut-2-en-1-yl diphosphate synthase (flavodoxin) from Campylobacter jejuni (strain RM1221).